Here is a 265-residue protein sequence, read N- to C-terminus: MLPGRHTPRRADAAAAAAAMEPLVPGATRAALSEFVATAVFVFAAEGSVYGLWKMYRDTGTLGGLLVVAVAHALALAAAVAVSRNASGGHVNPAVTFGVLVGRRISFARAALYWAAQLLGAVLAVLLLRLASGGMRPMGFTLGHRIHERHALLLEVVMTFGLVYTVYATAVDRRSGGGDIAPLAIGLVAGANILAGGPFDGAAMNPARAFGPALVGWNWRHHWVYWLGPLIGAGMAGALYEFVMAEQPEPPAAADTRLPVAAEDY.

The next 2 helical transmembrane spans lie at 32–52 (LSEFVATAVFVFAAEGSVYGL) and 62–82 (LGGLLVVAVAHALALAAAVAV). Residues 92–94 (NPA) carry the NPA 1 motif. The next 3 helical transmembrane spans lie at 110 to 130 (AALYWAAQLLGAVLAVLLLRL), 151 to 171 (ALLLEVVMTFGLVYTVYATAV), and 179 to 199 (DIAPLAIGLVAGANILAGGPF). Residues 205–207 (NPA) carry the NPA 2 motif. The chain crosses the membrane as a helical span at residues 223 to 243 (WVYWLGPLIGAGMAGALYEFV).

This sequence belongs to the MIP/aquaporin (TC 1.A.8) family. TIP (TC 1.A.8.10) subfamily. In terms of tissue distribution, expressed in leaves and at lower levels in roots.

It is found in the vacuole membrane. Aquaporins facilitate the transport of water and small neutral solutes across cell membranes. May be involved in transport from the vacuolar compartment to the cytoplasm. The chain is Probable aquaporin TIP3-2 (TIP3-2) from Oryza sativa subsp. japonica (Rice).